A 592-amino-acid polypeptide reads, in one-letter code: Inactive glycosyltransferase 25 family member 3 (592 aa).

Residues 1–19 (MHVARLLPLLLLLGQQLRA) form the signal peptide. N-linked (GlcNAc...) asparagine glycosylation is found at Asn-72, Asn-150, Asn-234, and Asn-357. The tract at residues 540 to 592 (AEWLSDTETSSPWDDDSGRLISQTGSQKALRGPHLHLTGSSGHSLHPHHRDEL) is disordered. The Prevents secretion from ER motif lies at 589–592 (RDEL).

It belongs to the glycosyltransferase 25 family.

It localises to the endoplasmic reticulum lumen. Functionally, probable cell adhesion protein involved in leukocyte transmigration across the blood-brain barrier. Does not express any beta-galactosyltransferase activity in vitro. This Mus musculus (Mouse) protein is Inactive glycosyltransferase 25 family member 3 (Cercam).